The chain runs to 331 residues: HPr kinase/phosphorylase (331 aa).

Residues His153 and Lys174 contribute to the active site. 168 to 175 (GKSGLGKS) lines the ATP pocket. Ser175 provides a ligand contact to Mg(2+). Residue Asp192 is the Proton acceptor; for phosphorylation activity. Proton donor; for dephosphorylation activity of the active site. Positions 217–226 (MEIRGLGVVD) are important for the catalytic mechanism of both phosphorylation and dephosphorylation. Glu218 provides a ligand contact to Mg(2+). Arg259 is a catalytic residue. An important for the catalytic mechanism of dephosphorylation region spans residues 280–285 (PIFPGK).

The protein belongs to the HPrK/P family. Homohexamer. It depends on Mg(2+) as a cofactor.

The catalysed reaction is [HPr protein]-L-serine + ATP = [HPr protein]-O-phospho-L-serine + ADP + H(+). The enzyme catalyses [HPr protein]-O-phospho-L-serine + phosphate + H(+) = [HPr protein]-L-serine + diphosphate. Functionally, catalyzes the ATP- as well as the pyrophosphate-dependent phosphorylation of a specific serine residue in HPr, a phosphocarrier protein of the phosphoenolpyruvate-dependent sugar phosphotransferase system (PTS). HprK/P also catalyzes the pyrophosphate-producing, inorganic phosphate-dependent dephosphorylation (phosphorolysis) of seryl-phosphorylated HPr (P-Ser-HPr). This is HPr kinase/phosphorylase from Pelodictyon phaeoclathratiforme (strain DSM 5477 / BU-1).